Here is a 508-residue protein sequence, read N- to C-terminus: Maturase K (508 aa).

The protein belongs to the intron maturase 2 family. MatK subfamily.

The protein localises to the plastid. It is found in the chloroplast. Functionally, usually encoded in the trnK tRNA gene intron. Probably assists in splicing its own and other chloroplast group II introns. This chain is Maturase K, found in Stewartia pseudocamellia (Japanese stewartia).